The chain runs to 437 residues: Magnetosome protein MamN (437 aa).

Transmembrane regions (helical) follow at residues 26-46 (LAVL…GTYT), 53-73 (SIYF…ALLA), 95-115 (WILV…NSLI), 136-156 (VPVI…TMIG), 174-194 (FIGG…LFFE), 229-249 (YGLI…PLKV), 252-268 (GWIA…LGRF), 281-301 (DILF…VGIL), 320-340 (AILL…GTSA), 358-378 (AAWW…LSGA), and 416-436 (WGLP…AVLA).

This sequence belongs to the arsenite-antimonite (ArsB) efflux (TC 2.A.45) family.

The protein resides in the magnetosome membrane. Its function is as follows. Plays a role in biomineralization; might regulate pH in the magnetosome. This chain is Magnetosome protein MamN, found in Magnetospirillum gryphiswaldense (strain DSM 6361 / JCM 21280 / NBRC 15271 / MSR-1).